The chain runs to 382 residues: O-methyltransferase okaF (382 aa).

The S-adenosyl-L-methionine site is built by Glu249 and Arg287. His291 acts as the Proton acceptor in catalysis.

Belongs to the class I-like SAM-binding methyltransferase superfamily. Cation-independent O-methyltransferase family.

The enzyme catalyses 3-desmethyl okaramine B + S-adenosyl-L-methionine = okaramine B + S-adenosyl-L-homocysteine + H(+). Its pathway is alkaloid biosynthesis. Functionally, O-methyltransferase; part of the gene cluster that mediates the biosynthesis of okaramine B, a prenylated indole alkaloid that possesses an unusual octacyclic ring system, including a four-membered azetidine ring and an eight-membered azocine ring, and that exhibits insecticidal activity against silkworm larvae. Within the pathway, okaF catalyzes the last step which is the methylation of 3-desmethyl okaramine B to produce okaramine B. With okaG, OkaF is also able to produce okaramine D from okaramine E. The biosynthesis begins with the NRPS okaA that condenses two tryptophan molecules into cyclo(L-Trp-L-Trp). Prenylation by the prenyltransferase okaC then leads to the formation of cyclo(N8-(alpha,alpha-dimethylallyl)-L-Trp-6a-(alpha,alpha-dime-thylallyl)-L-Trp). This is followed by indole 2,3-epoxidation by the FAD-dependent monooxygenase okaB to facilitate the formation of the hexahydropyrrolo[2,3-b]indole (HPI) moiety of okaramine C. The cytochrome P450 monooxygenase okaD then likely catalyzes formation of the eight-membered ring of okaramine A. The dioxygenase okaE further forms the unusual 2-dimethyl-3-methyl-azetidine ring to yield 12-deshydroxyl okaramine E, as well as the hydroxylation of 12-deshydroxyl okaramine E to produce okaramine E. The cytochrome P450 monoxygenase okaG converts 12-deshydroxyl okaramine E into 3-desmethyl okaramine B which is further methylated by the methyltransferase okaF into okaramine B. In a shunt pathway, okaG and okaF together are also able to convert okaramine E into okaramine D. Okaramine H is produced by nonenzymatic conversion from okaramine A. In Penicillium ochrochloron, this protein is O-methyltransferase okaF.